The chain runs to 332 residues: Alpha/beta hydrolase domain-containing protein aho-3 (332 aa).

Over residues 1-15 (MSSGAPSGSSMSSTP) the composition is skewed to low complexity. The segment at 1–24 (MSSGAPSGSSMSSTPGSPPPRAGG) is disordered. Catalysis depends on charge relay system residues Ser191, Asp256, and His285.

It belongs to the AB hydrolase superfamily. ABHD17 family. Post-translationally, palmitoylated on cysteine residues located in a cysteine cluster at the N-terminus which promotes membrane localization and localization to sensory neuron endings. In terms of tissue distribution, expressed in a subset of neurons including AIY, HSN, ADF, AFD, AWC, AWB and NSM, hypodermis, pharyngeal muscle and intestine.

It localises to the cell membrane. The protein localises to the cytoplasmic vesicle membrane. The catalysed reaction is S-hexadecanoyl-L-cysteinyl-[protein] + H2O = L-cysteinyl-[protein] + hexadecanoate + H(+). Hydrolyzes fatty acids from S-acylated cysteine residues in proteins. Acts in sensory neurons including AWC to regulate starvation-induced thermotaxis plasticity and salt learning behavior. This is Alpha/beta hydrolase domain-containing protein aho-3 from Caenorhabditis elegans.